The primary structure comprises 579 residues: Potassium-transporting ATPase potassium-binding subunit (579 aa).

Helical transmembrane passes span 2–22 (MNLVLQYGLYILILVVLAIPL), 66–86 (SFSVLAFSIISLIVLFLIHIF), 135–155 (GLTVQNFVSAAVGISVLFALI), 177–197 (VLYILIPLSIVVSLALVSQGV), 262–282 (LSNLFEMISLLLIPVALCFTF), 292–312 (GIAIFIAMGIMLVVAMGIIGV), 391–411 (VFGGVGCGLYGMIGFAILAVF), 437–457 (VLVCLATPIAILIGSGIASIL), 490–510 (FAGFAANTPFINISIGLSMLF), and 546–566 (FIGLLIFVVLLIGALSFFPAL).

It belongs to the KdpA family. In terms of assembly, the system is composed of three essential subunits: KdpA, KdpB and KdpC.

It is found in the cell membrane. Part of the high-affinity ATP-driven potassium transport (or Kdp) system, which catalyzes the hydrolysis of ATP coupled with the electrogenic transport of potassium into the cytoplasm. This subunit binds the extracellular potassium ions and delivers the ions to the membrane domain of KdpB through an intramembrane tunnel. The protein is Potassium-transporting ATPase potassium-binding subunit of Clostridium botulinum (strain Alaska E43 / Type E3).